A 142-amino-acid chain; its full sequence is MAIERTFSIIKPDAVSKNLIGAIYNRFESAGLKVIAAKMLHMSSEQAAGFYAEHQGKPFYDGLVSFMTSGPVMIQVLEGEEAIRRHREIMGATNPKEALAGTLRACFAESIDRNAVHGSDAPASAAREIAYFFSDAEICPRG.

ATP contacts are provided by K11, F59, R87, T93, R104, and N114. The active-site Pros-phosphohistidine intermediate is the H117.

This sequence belongs to the NDK family. In terms of assembly, homotetramer. It depends on Mg(2+) as a cofactor.

It is found in the cytoplasm. The enzyme catalyses a 2'-deoxyribonucleoside 5'-diphosphate + ATP = a 2'-deoxyribonucleoside 5'-triphosphate + ADP. It carries out the reaction a ribonucleoside 5'-diphosphate + ATP = a ribonucleoside 5'-triphosphate + ADP. Functionally, major role in the synthesis of nucleoside triphosphates other than ATP. The ATP gamma phosphate is transferred to the NDP beta phosphate via a ping-pong mechanism, using a phosphorylated active-site intermediate. The protein is Nucleoside diphosphate kinase of Aeromonas hydrophila subsp. hydrophila (strain ATCC 7966 / DSM 30187 / BCRC 13018 / CCUG 14551 / JCM 1027 / KCTC 2358 / NCIMB 9240 / NCTC 8049).